A 318-amino-acid polypeptide reads, in one-letter code: tRNA pseudouridine synthase B (318 aa).

Residue D47 is the Nucleophile of the active site.

It belongs to the pseudouridine synthase TruB family. Type 1 subfamily.

The enzyme catalyses uridine(55) in tRNA = pseudouridine(55) in tRNA. Functionally, responsible for synthesis of pseudouridine from uracil-55 in the psi GC loop of transfer RNAs. This chain is tRNA pseudouridine synthase B, found in Shewanella putrefaciens (strain CN-32 / ATCC BAA-453).